The chain runs to 122 residues: Large ribosomal subunit protein uL14 (122 aa).

Belongs to the universal ribosomal protein uL14 family. As to quaternary structure, part of the 50S ribosomal subunit. Forms a cluster with proteins L3 and L19. In the 70S ribosome, L14 and L19 interact and together make contacts with the 16S rRNA in bridges B5 and B8.

Functionally, binds to 23S rRNA. Forms part of two intersubunit bridges in the 70S ribosome. In Bradyrhizobium diazoefficiens (strain JCM 10833 / BCRC 13528 / IAM 13628 / NBRC 14792 / USDA 110), this protein is Large ribosomal subunit protein uL14.